The following is a 366-amino-acid chain: Peptide chain release factor 2 (366 aa).

At Gln253 the chain carries N5-methylglutamine.

This sequence belongs to the prokaryotic/mitochondrial release factor family. Methylated by PrmC. Methylation increases the termination efficiency of RF2.

The protein resides in the cytoplasm. Its function is as follows. Peptide chain release factor 2 directs the termination of translation in response to the peptide chain termination codons UGA and UAA. This chain is Peptide chain release factor 2, found in Yersinia pseudotuberculosis serotype I (strain IP32953).